Reading from the N-terminus, the 384-residue chain is Glucans biosynthesis protein C (384 aa).

10 helical membrane passes run 17-37 (AWLMLLGIPFHISLIYSTHSW), 54-74 (FIHAFRMQVFFVISGYFSYML), 91-111 (VGIPMLTAIPLLTLPQFILLQ), 140-160 (LWFLLVLVILTTVSIGIFTWF), 173-193 (AISLVRLSLIFFLLGMAYAAI), 212-232 (FIVMQTLFYVPFFILGALAFI), 240-260 (FTTPSRGCTLGAAVAFIAYLL), 274-294 (TESVITMVMGLWMVNVVFSLG), 311-331 (ASLFIYLVHHPLTLFFGAYIT), and 338-358 (LIGFLCGLIFVMGIALILYEI).

This sequence belongs to the acyltransferase 3 family. OpgC subfamily.

It localises to the cell membrane. Its pathway is glycan metabolism; osmoregulated periplasmic glucan (OPG) biosynthesis. Its function is as follows. Necessary for the succinyl substitution of periplasmic glucans. Could catalyze the transfer of succinyl residues from the cytoplasmic side of the membrane to the nascent glucan backbones on the periplasmic side of the membrane. This Salmonella choleraesuis (strain SC-B67) protein is Glucans biosynthesis protein C.